A 232-amino-acid chain; its full sequence is Glycerol-3-phosphate acyltransferase 4 (232 aa).

Transmembrane regions (helical) follow at residues Val4 to Leu24, Leu54 to Leu76, Leu80 to Phe99, Gly107 to Leu127, Val143 to Val163, and Thr168 to Pro188.

The protein belongs to the PlsY family. In terms of assembly, probably interacts with PlsX.

It localises to the cell membrane. The catalysed reaction is an acyl phosphate + sn-glycerol 3-phosphate = a 1-acyl-sn-glycero-3-phosphate + phosphate. Its pathway is lipid metabolism; phospholipid metabolism. Its function is as follows. Catalyzes the transfer of an acyl group from acyl-phosphate (acyl-PO(4)) to glycerol-3-phosphate (G3P) to form lysophosphatidic acid (LPA). This enzyme utilizes acyl-phosphate as fatty acyl donor, but not acyl-CoA or acyl-ACP. In Dehalococcoides mccartyi (strain CBDB1), this protein is Glycerol-3-phosphate acyltransferase 4.